The primary structure comprises 244 residues: Type III pantothenate kinase (244 aa).

ATP is bound at residue 6–13; that stretch reads DVGNTRIK. Substrate contacts are provided by residues Tyr87 and 94–97; that span reads GIDR. Asp96 functions as the Proton acceptor in the catalytic mechanism. A K(+)-binding site is contributed by Asp117. Thr120 is a binding site for ATP. Thr172 provides a ligand contact to substrate.

The protein belongs to the type III pantothenate kinase family. As to quaternary structure, homodimer. Requires NH4(+) as cofactor. The cofactor is K(+).

Its subcellular location is the cytoplasm. It catalyses the reaction (R)-pantothenate + ATP = (R)-4'-phosphopantothenate + ADP + H(+). The protein operates within cofactor biosynthesis; coenzyme A biosynthesis; CoA from (R)-pantothenate: step 1/5. Catalyzes the phosphorylation of pantothenate (Pan), the first step in CoA biosynthesis. The sequence is that of Type III pantothenate kinase from Flavobacterium johnsoniae (strain ATCC 17061 / DSM 2064 / JCM 8514 / BCRC 14874 / CCUG 350202 / NBRC 14942 / NCIMB 11054 / UW101) (Cytophaga johnsonae).